The chain runs to 332 residues: L-lactate dehydrogenase A chain (332 aa).

NAD(+) contacts are provided by residues 29-57 (GAVG…VEDK) and R99. Residues R106, N138, and R169 each coordinate substrate. Residue N138 coordinates NAD(+). The active-site Proton acceptor is H193. Residue T248 coordinates substrate.

It belongs to the LDH/MDH superfamily. LDH family. In terms of assembly, homotetramer.

The protein resides in the cytoplasm. The catalysed reaction is (S)-lactate + NAD(+) = pyruvate + NADH + H(+). Its pathway is fermentation; pyruvate fermentation to lactate; (S)-lactate from pyruvate: step 1/1. Its function is as follows. Interconverts simultaneously and stereospecifically pyruvate and lactate with concomitant interconversion of NADH and NAD(+). In Caiman crocodilus apaporiensis (Rio Apaporis caiman), this protein is L-lactate dehydrogenase A chain (LDHA).